We begin with the raw amino-acid sequence, 236 residues long: Increased recombination centers protein 22-2 (236 aa).

Positions M1 to G19 are cleaved as a signal peptide. Residues Y20 to L161 lie on the Lumenal side of the membrane. The helical transmembrane segment at I162–I182 threads the bilayer. At W183–A236 the chain is on the cytoplasmic side.

Belongs to the IRC22 family.

It is found in the endoplasmic reticulum membrane. Its function is as follows. Is probably involved in a pathway contributing to genomic integrity. This Candida tropicalis (strain ATCC MYA-3404 / T1) (Yeast) protein is Increased recombination centers protein 22-2 (IRC22-2).